A 325-amino-acid chain; its full sequence is Isoaspartyl peptidase/L-asparaginase (325 aa).

T193 functions as the Nucleophile in the catalytic mechanism. Residues 221–224 (RIGD) and 243–246 (TGKG) contribute to the substrate site.

Belongs to the Ntn-hydrolase family. As to quaternary structure, heterotetramer of two alpha and two beta chains arranged as a dimer of alpha/beta heterodimers. Post-translationally, cleaved into an alpha and beta chain by autocatalysis; this activates the enzyme. The N-terminal residue of the beta subunit is responsible for the nucleophile hydrolase activity. As to expression, expressed in ripening seeds and developing nodules.

The catalysed reaction is Cleavage of a beta-linked Asp residue from the N-terminus of a polypeptide.. Its function is as follows. Degrades proteins damaged by L-isoaspartyl residue formation (also known as beta-Asp residues). Also has L-asparaginase activity, which is used to liberate stored nitrogen during seed development. The sequence is that of Isoaspartyl peptidase/L-asparaginase from Lupinus luteus (European yellow lupine).